The primary structure comprises 301 residues: Runt-related transcription factor rnt-1 (301 aa).

The Runt domain maps to 10–138 (NFIEQQPAPA…TVDGPRDARI (129 aa)). Interaction with DNA stretches follow at residues 40-44 (RSNKS), 95-103 (RFVGRSGRG), and 128-137 (VTVDGPRDAR). Positions 99 and 130 each coordinate chloride. The interval 237 to 301 (PSIFITPTSD…SSSPTIWRPF (65 aa)) is disordered. Ser255 carries the post-translational modification Phosphoserine. A compositionally biased stretch (polar residues) spans 255-276 (SPRSITKSSETSINLIQETPES). The span at 285 to 301 (VSITSSNSSSPTIWRPF) shows a compositional bias: low complexity.

In terms of assembly, interacts with CBFbeta homolog bro-1; acts to increase the affinity and specificity of interaction of rnt-1 with DNA. Interacts with TGF-beta pathway protein sma-4. Post-translationally, may be ubiquitinated in order to be targeted for proteasome-mediated degradation in intestinal cells. In terms of processing, may be phosphorylated by members of the p38 MAP kinase pathway. In terms of tissue distribution, expressed in the intestine.

Its subcellular location is the nucleus. Transcription factor. Binds to regulatory DNA sequences in order to modulate transcription; negatively autoregulates its own expression, perhaps dependent upon CBF beta homolog bro-1. Promotes proliferation, and prevents differentiation, of seam cells, a stem cell-like lineage, acting in concert with bro-1. Required for controlling cell proliferation in the seam cells, perhaps by repressing expression of cyclin-dependent kinase inhibitor cki-1. Inhibition of seam cell differentiation is regulated by rnt-1 and bro-1, perhaps acting upstream of pop-1, by antagonizing pop-1 repressor function. Required for asymmetrical cell divisions in the lineage derived from a posterior embryonic seam cell, the T blast cell, and for asymmetric expression of zinc finger protein tlp-1. Regulates growth and male tail development. Involved in the oxidative stress response, perhaps downstream of the p38 MAP kinase pathway, and acting as part of a negative feedback loop via a transcriptional target gene, tyrosine-protein phosphatase vhp-1. Positively modulates dopaminergic signaling in a non-cell autonomous manner. May be involved in TGF-beta signaling. The chain is Runt-related transcription factor rnt-1 from Caenorhabditis elegans.